We begin with the raw amino-acid sequence, 503 residues long: ATP synthase subunit alpha (503 aa).

An ATP-binding site is contributed by 171–178 (DRQTGKTA).

It belongs to the ATPase alpha/beta chains family. F-type ATPases have 2 components, CF(1) - the catalytic core - and CF(0) - the membrane proton channel. CF(1) has five subunits: alpha(3), beta(3), gamma(1), delta(1), epsilon(1). CF(0) has four main subunits: a(1), b(1), b'(1) and c(9-12).

The protein resides in the cellular thylakoid membrane. It catalyses the reaction ATP + H2O + 4 H(+)(in) = ADP + phosphate + 5 H(+)(out). In terms of biological role, produces ATP from ADP in the presence of a proton gradient across the membrane. The alpha chain is a regulatory subunit. This is ATP synthase subunit alpha from Synechococcus sp. (strain PCC 6716).